The chain runs to 293 residues: 1D-myo-inositol 2-acetamido-2-deoxy-alpha-D-glucopyranoside deacetylase 2 (293 aa).

Residues His-6, Asp-9, and His-142 each contribute to the Zn(2+) site.

This sequence belongs to the MshB deacetylase family. The cofactor is Zn(2+).

The catalysed reaction is 1D-myo-inositol 2-acetamido-2-deoxy-alpha-D-glucopyranoside + H2O = 1D-myo-inositol 2-amino-2-deoxy-alpha-D-glucopyranoside + acetate. Its function is as follows. Catalyzes the deacetylation of 1D-myo-inositol 2-acetamido-2-deoxy-alpha-D-glucopyranoside (GlcNAc-Ins) in the mycothiol biosynthesis pathway. The protein is 1D-myo-inositol 2-acetamido-2-deoxy-alpha-D-glucopyranoside deacetylase 2 of Frankia alni (strain DSM 45986 / CECT 9034 / ACN14a).